A 149-amino-acid chain; its full sequence is Large ribosomal subunit protein uL15A (149 aa).

The segment at 21–40 (RIGKHRKQRGGRGNAGGQHH) is disordered.

This sequence belongs to the universal ribosomal protein uL15 family. Component of the large ribosomal subunit.

Its subcellular location is the cytoplasm. It is found in the cytosol. The protein resides in the endoplasmic reticulum. Functionally, component of the large ribosomal subunit. The ribosome is a large ribonucleoprotein complex responsible for the synthesis of proteins in the cell. The protein is Large ribosomal subunit protein uL15A (rpl27a-1) of Entamoeba histolytica (strain ATCC 30459 / HM-1:IMSS / ABRM).